The sequence spans 222 residues: MGLVVKDISKTFGEKTSKTEVLKDINFEVKDGEFIILNGASGSGKTTLLTILGGLLSQTSGDVVYEGKSLFERHTNKAHLRLNDIGFIFQASHLVPYLKVLDQLTLIGKETGMSSKEAQARAKELLTKIGLEEQLNSYPHMLSGGQQQRVAIMRALMNHPKIVLADEPTASLDASRAQEVVEMIRKQIKANQMIGIMITHDESLFKYADRIVQLYDGKIKNS.

Residues 3-222 enclose the ABC transporter domain; it reads LVVKDISKTF…QLYDGKIKNS (220 aa). 39–46 is a binding site for ATP; that stretch reads GASGSGKT.

This sequence belongs to the ABC transporter superfamily. HrtA family. In terms of assembly, the complex is composed of two ATP-binding proteins (HrtA), two transmembrane proteins (HrtB) and a solute-binding protein.

The protein resides in the cell membrane. Its function is as follows. Part of the ABC transporter complex hrt involved in hemin import. Responsible for energy coupling to the transport system. The chain is Putative hemin import ATP-binding protein HrtA (hrtA) from Staphylococcus epidermidis (strain ATCC 35984 / DSM 28319 / BCRC 17069 / CCUG 31568 / BM 3577 / RP62A).